The primary structure comprises 258 residues: MKHSKKTYDSFQDELEDYIKVQKARGLEPKTCFRKMRGDYLETCGYKGEVNSRPTYRMFDQRLPPETIQTYPRSCTISQTVENRLPQWLPAHDSRLRLDSLSYCQFTRDCFSEKPVPLNFDQQEYICGSHGVEPRVYKHFSDNSTSTHQASHKQIHQKRKRHPEEGREKSEEEWSKHKRKKSCKEIDLDKHKSIQRKKTEVEIETVHVSTEKLKNRKEKKGRDVVSKKEERKRTKKKKEQGQERTEEEMLWDQSILGF.

The tract at residues 142–258 (DNSTSTHQAS…MLWDQSILGF (117 aa)) is disordered. Residues 150 to 161 (ASHKQIHQKRKR) show a composition bias toward basic residues. 3 stretches are compositionally biased toward basic and acidic residues: residues 162-175 (HPEEGREKSEEEWS), 183-213 (CKEIDLDKHKSIQRKKTEVEIETVHVSTEKL), and 220-232 (KGRDVVSKKEERK). A coiled-coil region spans residues 211–248 (EKLKNRKEKKGRDVVSKKEERKRTKKKKEQGQERTEEE).

This chain is Lysine-rich coiled-coil protein 1 (KRCC1), found in Pongo abelii (Sumatran orangutan).